Consider the following 428-residue polypeptide: Enolase (428 aa).

Residue Gln162 coordinates (2R)-2-phosphoglycerate. The active-site Proton donor is Glu204. Mg(2+) is bound by residues Asp241, Glu282, and Asp309. Positions 334, 363, 364, and 385 each coordinate (2R)-2-phosphoglycerate. Lys334 acts as the Proton acceptor in catalysis.

It belongs to the enolase family. The cofactor is Mg(2+).

It localises to the cytoplasm. The protein resides in the secreted. It is found in the cell surface. The catalysed reaction is (2R)-2-phosphoglycerate = phosphoenolpyruvate + H2O. It functions in the pathway carbohydrate degradation; glycolysis; pyruvate from D-glyceraldehyde 3-phosphate: step 4/5. Catalyzes the reversible conversion of 2-phosphoglycerate (2-PG) into phosphoenolpyruvate (PEP). It is essential for the degradation of carbohydrates via glycolysis. The chain is Enolase from Mycobacterium ulcerans (strain Agy99).